Consider the following 201-residue polypeptide: MHEWGLSEELKIQTKQMIEIAEKELSIMRNAIDKEDECILCKMEDIHHMLANVQTLAATYYIQAYLSPYTESSSFITTAIQHLSARKHGALIVVERNETLEALIQTGTTLNAHLTAPLLESIFYPGNPLHDGAVLVKNNHIVSAANILPLTKSTEVDPELGTRHRAAIGLSEKSDALILVVSEETGRTSFALNGILYTISL.

A DAC domain is found at 54-201 (QTLAATYYIQ…LNGILYTISL (148 aa)).

This sequence belongs to the adenylate cyclase family. DacB/CdaS subfamily. As to quaternary structure, probably forms a homohexamer. Requires Mg(2+) as cofactor.

It catalyses the reaction 2 ATP = 3',3'-c-di-AMP + 2 diphosphate. Its function is as follows. One of 3 paralogous diadenylate cyclases (DAC) in this bacteria catalyzing the condensation of 2 ATP molecules into cyclic di-AMP (c-di-AMP). It has slow DAC activity with ADP as a substrate and may have weak ADPase activity. Required for efficient spore formation, whereas in B.subtilis, it is required for efficient spore germination. It is produced under the control of different sigma factors in the two bacteria. It is also required for parasporal crystal formation. The polypeptide is Diadenylate cyclase CdaS (Bacillus thuringiensis (strain BMB171)).